Here is a 76-residue protein sequence, read N- to C-terminus: Small ribosomal subunit protein bS18 (76 aa).

The protein belongs to the bacterial ribosomal protein bS18 family. Part of the 30S ribosomal subunit. Forms a tight heterodimer with protein bS6.

Binds as a heterodimer with protein bS6 to the central domain of the 16S rRNA, where it helps stabilize the platform of the 30S subunit. The chain is Small ribosomal subunit protein bS18 from Pseudomonas entomophila (strain L48).